The primary structure comprises 399 residues: Enoyl-[acyl-carrier-protein] reductase [NADH] (399 aa).

NAD(+) is bound by residues 48-53 (GASTGY), 74-75 (FE), 111-112 (DA), and 139-140 (LA). Y225 is a substrate binding site. Y235 acts as the Proton donor in catalysis. Residues K244 and 273 to 275 (VVT) contribute to the NAD(+) site.

The protein belongs to the TER reductase family. Monomer.

It carries out the reaction a 2,3-saturated acyl-[ACP] + NAD(+) = a (2E)-enoyl-[ACP] + NADH + H(+). It participates in lipid metabolism; fatty acid biosynthesis. Involved in the final reduction of the elongation cycle of fatty acid synthesis (FAS II). Catalyzes the reduction of a carbon-carbon double bond in an enoyl moiety that is covalently linked to an acyl carrier protein (ACP). The protein is Enoyl-[acyl-carrier-protein] reductase [NADH] of Serratia proteamaculans (strain 568).